The chain runs to 180 residues: Adenine phosphoribosyltransferase (180 aa).

The protein belongs to the purine/pyrimidine phosphoribosyltransferase family. In terms of assembly, homodimer.

The protein resides in the cytoplasm. It catalyses the reaction AMP + diphosphate = 5-phospho-alpha-D-ribose 1-diphosphate + adenine. The protein operates within purine metabolism; AMP biosynthesis via salvage pathway; AMP from adenine: step 1/1. Its function is as follows. Catalyzes a salvage reaction resulting in the formation of AMP, that is energically less costly than de novo synthesis. The protein is Adenine phosphoribosyltransferase of Butyrivibrio fibrisolvens.